A 3619-amino-acid chain; its full sequence is BEACH domain-containing protein lvsA (3619 aa).

Disordered stretches follow at residues 1-117, 648-709, 1101-1129, 1367-1390, 1636-1658, 1893-1924, and 1964-1999; these read MFRR…NNNN, KIDD…EKEA, NNNNNNSSNNSNNSNNSNNNNNNNNNNDQ, SPNLTGLQNNNNNNNNSGGSNSKK, IPTPSSSSSSSSTSSTSSRRKSI, SSISSNISSSSSSSTLVNSSNSNNNNNTPTSG, and QQAALKKKNRMSIQSSPFQSKNLGTGGDDSVTNTPN. The span at 17-30 shows a compositional bias: pro residues; it reads PQVPHSPGHPPHQP. 8 stretches are compositionally biased toward low complexity: residues 31 to 59, 68 to 87, 97 to 117, 656 to 689, 1101 to 1127, 1375 to 1387, 1640 to 1652, and 1893 to 1923; these read PQQQQQQQQQQQQQQQQQQQQQQQQQQPQ, SVSSPIGSTTSSNSTSSFSS, EESSSINSNNNNNNNKNNNNN, NNNNNNNNNNNNNNNNNNNDNDNNNNNDNNNEEN, NNNNNNSSNNSNNSNNSNNNNNNNNNN, NNNNNNNNSGGSN, SSSSSSSSTSSTS, and SSISSNISSSSSSSTLVNSSNSNNNNNTPTS. Residues 94–133 form a WD 1 repeat; it reads SATEESSSINSNNNNNNNKNNNNNNNSNIIESNINVWTIM. Polar residues predominate over residues 1974 to 1986; it reads MSIQSSPFQSKNL. Residues 2234–2258 adopt a coiled-coil conformation; sequence VKILEKLEADRVGLQKTVQSLYKSL. Residues 2294 to 2335 form a WD 2 repeat; it reads LDSDFMNAFCYPLYKLVISDQHEHVDNSIKLWRLLLSLKTSS. Disordered stretches follow at residues 2403-2457 and 2596-2785; these read KKQH…ITKK and NTSS…SEDE. Residues 2440–2452 show a composition bias toward basic and acidic residues; the sequence is DRKDQSHQEEKSK. Positions 2596–2662 are enriched in low complexity; sequence NTSSITNNNN…TTTPQQSSSQ (67 aa). Composition is skewed to polar residues over residues 2663–2687 and 2694–2725; these read IKVSSPELSSNEITPPTSPVQSSSE and KLQSSTVEGQLSRNPSSSELFNDNSSTISEEN. Low complexity-rich tracts occupy residues 2726–2735 and 2742–2764; these read SSLTSASTTL and TQTTTTTTTSTPTTQSSVATTTT. Residues 2807 to 2932 form the BEACH-type PH domain; the sequence is KDPRLNGIMY…TRDEVYHTLV (126 aa). The interval 2940-2971 is disordered; it reads TIGGDAQGITGGQTGNDDNDDHHGGGGGRGVR. The span at 2944–2953 shows a compositional bias: gly residues; it reads DAQGITGGQT. A compositionally biased stretch (basic and acidic residues) spans 2959–2971; that stretch reads DDHHGGGGGRGVR. One can recognise a BEACH domain in the interval 2972 to 3270; sequence DRFTSIWRKS…QLFDKPHPKR (299 aa). WD repeat units lie at residues 3347–3386, 3389–3428, 3431–3471, 3474–3518, and 3563–3602; these read HHDGPLTCLTATEDGRICVSGGSDSLICVYNLKRFSLAKR, GHTGSITCVSASRPYSIIVSGSDDRTCIIWDLNRLCYVRS, AHEG…NYKT, IAND…LPDN, and SHSTAITSIFLTNDQQKFYTGDITGRVCMWSDNEASQVKQ. Positions 3516-3539 are disordered; the sequence is PDNNNSNNNNNNNNNNNNNATQIP. Over residues 3518–3534 the composition is skewed to low complexity; that stretch reads NNNSNNNNNNNNNNNNN.

Its subcellular location is the contractile vacuole membrane. In terms of biological role, involved in myosin-independent cytokinesis and early steps of phagocytosis. Also involved in contractile vacuole-mediated osmoregulation. The polypeptide is BEACH domain-containing protein lvsA (lvsA) (Dictyostelium discoideum (Social amoeba)).